We begin with the raw amino-acid sequence, 202 residues long: Glycerol-3-phosphate acyltransferase (202 aa).

Transmembrane regions (helical) follow at residues 11-31, 60-80, 88-108, 117-137, and 162-182; these read LLLF…GMVI, AAAA…VLLA, AAQL…WLGF, FLGL…LTWL, and LLLG…VILW.

This sequence belongs to the PlsY family. In terms of assembly, probably interacts with PlsX.

It localises to the cell inner membrane. The enzyme catalyses an acyl phosphate + sn-glycerol 3-phosphate = a 1-acyl-sn-glycero-3-phosphate + phosphate. The protein operates within lipid metabolism; phospholipid metabolism. Its function is as follows. Catalyzes the transfer of an acyl group from acyl-phosphate (acyl-PO(4)) to glycerol-3-phosphate (G3P) to form lysophosphatidic acid (LPA). This enzyme utilizes acyl-phosphate as fatty acyl donor, but not acyl-CoA or acyl-ACP. In Ruegeria sp. (strain TM1040) (Silicibacter sp.), this protein is Glycerol-3-phosphate acyltransferase.